Consider the following 326-residue polypeptide: uncharacterized protein (326 aa).

127–134 (GATGSGKS) provides a ligand contact to ATP.

The protein belongs to the GSP E family.

This is an uncharacterized protein from Escherichia coli (strain K12).